The chain runs to 1234 residues: ATP-dependent helicase/nuclease subunit A (1234 aa).

One can recognise a UvrD-like helicase ATP-binding domain in the interval 2 to 475 (TQFTTSQQAA…IILAENFRST (474 aa)). Position 23 to 30 (23 to 30 (ASAGSGKT)) interacts with ATP. Residues 507-806 (YGALDYGDAH…KLMTIHKSKG (300 aa)) enclose the UvrD-like helicase C-terminal domain.

It belongs to the helicase family. AddA subfamily. In terms of assembly, heterodimer of AddA and AddB/RexB. Requires Mg(2+) as cofactor.

The enzyme catalyses Couples ATP hydrolysis with the unwinding of duplex DNA by translocating in the 3'-5' direction.. It catalyses the reaction ATP + H2O = ADP + phosphate + H(+). Functionally, the heterodimer acts as both an ATP-dependent DNA helicase and an ATP-dependent, dual-direction single-stranded exonuclease. Recognizes the chi site generating a DNA molecule suitable for the initiation of homologous recombination. The AddA nuclease domain is required for chi fragment generation; this subunit has the helicase and 3' -&gt; 5' nuclease activities. The polypeptide is ATP-dependent helicase/nuclease subunit A (Lacticaseibacillus paracasei (strain ATCC 334 / BCRC 17002 / CCUG 31169 / CIP 107868 / KCTC 3260 / NRRL B-441) (Lactobacillus paracasei)).